Here is a 584-residue protein sequence, read N- to C-terminus: Delta 8-(E)-sphingolipid desaturase (584 aa).

The region spanning 7–82 is the Cytochrome b5 heme-binding domain; it reads KKIFTRSQII…FTRFKIGEIE (76 aa). Residues His-42 and His-65 each contribute to the heme site. Residues 109–134 are disordered; sequence NKNTSNKKTLDSKLDNDSSNSTSDLE. The chain crosses the membrane as a helical span at residues 261–281; the sequence is LFLYSLSFLKINQLFLSAVFM. A Histidine box-1 motif is present at residues 293–297; it reads HDAGH. A helical membrane pass occupies residues 306–326; it reads IDNIFGMLIADWFGGLSLGWW. Positions 330–334 match the Histidine box-2 motif; sequence HNVHH. A run of 3 helical transmembrane segments spans residues 386-403, 423-443, and 455-475; these read YLYY…YRLS, YFEF…LVFK, and VMVS…SHFA. Positions 514-518 match the Histidine box-3 motif; that stretch reads QAIHH.

This sequence belongs to the fatty acid desaturase type 1 family.

The protein localises to the membrane. The enzyme catalyses an N-acylsphing-4-enine + 2 Fe(II)-[cytochrome b5] + O2 + 2 H(+) = a (4E,8E)-4-sphinga-4,8-dienine ceramide + 2 Fe(III)-[cytochrome b5] + 2 H2O. It participates in lipid metabolism; sphingolipid metabolism. Delta(8)-fatty-acid desaturase which introduces a double bond at the 8-position in the long-chain base (LCB) of ceramides. Required for the formation of the di-unsaturated sphingoid base (E,E)-sphinga-4,8-dienine during glucosylceramide (GluCer) biosynthesis. This chain is Delta 8-(E)-sphingolipid desaturase, found in Candida albicans (strain SC5314 / ATCC MYA-2876) (Yeast).